We begin with the raw amino-acid sequence, 218 residues long: Glutathione S-transferase Y1 (218 aa).

Positions 2–88 (PMILGYWNVR…YIARKHNLCG (87 aa)) constitute a GST N-terminal domain. Glutathione-binding positions include 7-8 (YW), 46-50 (WLNEK), 59-60 (NL), and 72-73 (QS). Positions 90-208 (TEEERIRVDI…KTSRFLRRPI (119 aa)) constitute a GST C-terminal domain. Substrate is bound at residue Y116.

It belongs to the GST superfamily. Mu family. In terms of assembly, homodimer.

It localises to the cytoplasm. It carries out the reaction RX + glutathione = an S-substituted glutathione + a halide anion + H(+). Its function is as follows. Conjugation of reduced glutathione to a wide number of exogenous and endogenous hydrophobic electrophiles. This chain is Glutathione S-transferase Y1, found in Cricetulus longicaudatus (Long-tailed dwarf hamster).